The following is a 76-amino-acid chain: Large ribosomal subunit protein bL31 (76 aa).

Positions 16, 18, 38, and 41 each coordinate Zn(2+).

Belongs to the bacterial ribosomal protein bL31 family. Type A subfamily. As to quaternary structure, part of the 50S ribosomal subunit. It depends on Zn(2+) as a cofactor.

In terms of biological role, binds the 23S rRNA. The protein is Large ribosomal subunit protein bL31 of Nocardia farcinica (strain IFM 10152).